Consider the following 62-residue polypeptide: Photosystem II reaction center protein Z (62 aa).

Helical transmembrane passes span 8–28 (LIAAFVALSFAMIIGVPVVFS) and 41–61 (WGGAAAWVVLLFVAALASIVV).

It belongs to the PsbZ family. As to quaternary structure, PSII is composed of 1 copy each of membrane proteins PsbA, PsbB, PsbC, PsbD, PsbE, PsbF, PsbH, PsbI, PsbJ, PsbK, PsbL, PsbM, PsbT, PsbX, PsbY, PsbZ, Psb30/Ycf12, peripheral proteins PsbO, CyanoQ (PsbQ), PsbU, PsbV and a large number of cofactors. It forms dimeric complexes.

Its subcellular location is the cellular thylakoid membrane. In terms of biological role, may control the interaction of photosystem II (PSII) cores with the light-harvesting antenna, regulates electron flow through the 2 photosystem reaction centers. PSII is a light-driven water plastoquinone oxidoreductase, using light energy to abstract electrons from H(2)O, generating a proton gradient subsequently used for ATP formation. The chain is Photosystem II reaction center protein Z from Acaryochloris marina (strain MBIC 11017).